Here is a 362-residue protein sequence, read N- to C-terminus: Protein-glutamate methylesterase/protein-glutamine glutaminase (362 aa).

The region spanning 10-127 (RVLVVDDSAF…SLNMHVARDE (118 aa)) is the Response regulatory domain. Asp-61 carries the post-translational modification 4-aspartylphosphate. Residues 173-362 (RLPRRLVLIG…DAITRAVGEG (190 aa)) form the CheB-type methylesterase domain. Residues Ser-184, His-211, and Asp-304 contribute to the active site.

This sequence belongs to the CheB family. Phosphorylated by CheA. Phosphorylation of the N-terminal regulatory domain activates the methylesterase activity.

The protein localises to the cytoplasm. It carries out the reaction [protein]-L-glutamate 5-O-methyl ester + H2O = L-glutamyl-[protein] + methanol + H(+). The catalysed reaction is L-glutaminyl-[protein] + H2O = L-glutamyl-[protein] + NH4(+). Involved in chemotaxis. Part of a chemotaxis signal transduction system that modulates chemotaxis in response to various stimuli. Catalyzes the demethylation of specific methylglutamate residues introduced into the chemoreceptors (methyl-accepting chemotaxis proteins or MCP) by CheR. Also mediates the irreversible deamidation of specific glutamine residues to glutamic acid. This chain is Protein-glutamate methylesterase/protein-glutamine glutaminase, found in Symbiobacterium thermophilum (strain DSM 24528 / JCM 14929 / IAM 14863 / T).